A 158-amino-acid polypeptide reads, in one-letter code: NAD(P)H-quinone oxidoreductase subunit J, chloroplastic (158 aa).

The protein belongs to the complex I 30 kDa subunit family. In terms of assembly, NDH is composed of at least 16 different subunits, 5 of which are encoded in the nucleus.

It localises to the plastid. It is found in the chloroplast thylakoid membrane. It catalyses the reaction a plastoquinone + NADH + (n+1) H(+)(in) = a plastoquinol + NAD(+) + n H(+)(out). The enzyme catalyses a plastoquinone + NADPH + (n+1) H(+)(in) = a plastoquinol + NADP(+) + n H(+)(out). Its function is as follows. NDH shuttles electrons from NAD(P)H:plastoquinone, via FMN and iron-sulfur (Fe-S) centers, to quinones in the photosynthetic chain and possibly in a chloroplast respiratory chain. The immediate electron acceptor for the enzyme in this species is believed to be plastoquinone. Couples the redox reaction to proton translocation, and thus conserves the redox energy in a proton gradient. This is NAD(P)H-quinone oxidoreductase subunit J, chloroplastic from Draba nemorosa (Woodland whitlowgrass).